Consider the following 502-residue polypeptide: ATP synthase subunit alpha (502 aa).

Positions Gly-117–Arg-139 are disordered. Gly-169 to Thr-176 lines the ATP pocket.

It belongs to the ATPase alpha/beta chains family. F-type ATPases have 2 components, CF(1) - the catalytic core - and CF(0) - the membrane proton channel. CF(1) has five subunits: alpha(3), beta(3), gamma(1), delta(1), epsilon(1). CF(0) has three main subunits: a(1), b(2) and c(9-12). The alpha and beta chains form an alternating ring which encloses part of the gamma chain. CF(1) is attached to CF(0) by a central stalk formed by the gamma and epsilon chains, while a peripheral stalk is formed by the delta and b chains.

It is found in the cell membrane. It carries out the reaction ATP + H2O + 4 H(+)(in) = ADP + phosphate + 5 H(+)(out). Its function is as follows. Produces ATP from ADP in the presence of a proton gradient across the membrane. The alpha chain is a regulatory subunit. The chain is ATP synthase subunit alpha from Bacillus licheniformis (strain ATCC 14580 / DSM 13 / JCM 2505 / CCUG 7422 / NBRC 12200 / NCIMB 9375 / NCTC 10341 / NRRL NRS-1264 / Gibson 46).